The primary structure comprises 479 residues: Protein C-ets-2 (479 aa).

The PNT domain maps to 88–173 (DTFSGFTKEQ…EHLEQMIKDS (86 aa)). The ETS DNA-binding region spans 373–453 (IQLWQFLLEL…SGKRYVYRFV (81 aa)).

This sequence belongs to the ETS family.

The protein resides in the nucleus. Its function is as follows. Probable transcription factor. The protein is Protein C-ets-2 (ETS2) of Gallus gallus (Chicken).